We begin with the raw amino-acid sequence, 271 residues long: MNMLTEAAVEKALDQKMSNVPYKMIGQDVSVYYGEKRALFDVNLNIRENTVTALIGPSGCGKSTFLRSLNRMNDTIEGCRVAGKITLDGDDIYDPDIDVVELRARVGMVFQKPNPFPKSIYENVSYGPRIHGLAKSKADLDQIVESSLQRAGLWNEVKDRVHESGTGLSGGQQQRLCIARAVAVSPEVILMDEPCSALDPIATAKVEELIHELRENYTIVIVTHSMQQAARVSQRTAMFHLGNLVEENDTDKMFTNPDDPRTQDYIMGRFG.

An ABC transporter domain is found at 24–266 (MIGQDVSVYY…PDDPRTQDYI (243 aa)). 56–63 (GPSGCGKS) provides a ligand contact to ATP.

It belongs to the ABC transporter superfamily. Phosphate importer (TC 3.A.1.7) family. As to quaternary structure, the complex is composed of two ATP-binding proteins (PstB), two transmembrane proteins (PstC and PstA) and a solute-binding protein (PstS).

The protein resides in the cell inner membrane. The catalysed reaction is phosphate(out) + ATP + H2O = ADP + 2 phosphate(in) + H(+). Its function is as follows. Part of the ABC transporter complex PstSACB involved in phosphate import. Responsible for energy coupling to the transport system. The chain is Phosphate import ATP-binding protein PstB from Rhizobium etli (strain ATCC 51251 / DSM 11541 / JCM 21823 / NBRC 15573 / CFN 42).